Consider the following 198-residue polypeptide: 7-methyl-GTP pyrophosphatase (198 aa).

Asp-72 serves as the catalytic Proton acceptor.

It belongs to the Maf family. YceF subfamily. A divalent metal cation is required as a cofactor.

The protein resides in the cytoplasm. The catalysed reaction is N(7)-methyl-GTP + H2O = N(7)-methyl-GMP + diphosphate + H(+). Nucleoside triphosphate pyrophosphatase that hydrolyzes 7-methyl-GTP (m(7)GTP). May have a dual role in cell division arrest and in preventing the incorporation of modified nucleotides into cellular nucleic acids. This chain is 7-methyl-GTP pyrophosphatase, found in Idiomarina loihiensis (strain ATCC BAA-735 / DSM 15497 / L2-TR).